A 101-amino-acid polypeptide reads, in one-letter code: Large ribosomal subunit protein uL24 (101 aa).

This sequence belongs to the universal ribosomal protein uL24 family. Part of the 50S ribosomal subunit.

In terms of biological role, one of two assembly initiator proteins, it binds directly to the 5'-end of the 23S rRNA, where it nucleates assembly of the 50S subunit. Functionally, one of the proteins that surrounds the polypeptide exit tunnel on the outside of the subunit. The protein is Large ribosomal subunit protein uL24 of Jannaschia sp. (strain CCS1).